A 209-amino-acid polypeptide reads, in one-letter code: Mitochondrial import inner membrane translocase subunit Tim23 (209 aa).

A run of 3 helical transmembrane segments spans residues 73 to 93 (FELAFFTIGGCCMTGAAFGAM), 125 to 145 (ALWANTLGSLALLYSAFGVII), and 181 to 197 (GLTGLTLTSLYALYNNW).

Belongs to the Tim17/Tim22/Tim23 family. As to quaternary structure, component of the TIM23 complex at least composed of TIMM23, TIMM17 (TIMM17A or TIMM17B) and TIMM50; within this complex, directly interacts with TIMM50. The complex interacts with the TIMM44 component of the PAM complex and with DNAJC15. Upon mitochondrial depolarization, interacts with PINK1; the interaction is required for PINK1 accumulation at the outer mitochondrial membrane, kinase activation by autophosphorylation and PRKN recruitement to mitochondria.

Its subcellular location is the mitochondrion inner membrane. Functionally, essential component of the TIM23 complex, a complex that mediates the translocation of transit peptide-containing proteins across the mitochondrial inner membrane. Has a role in the activation of stress-induced mitophagy by protecting PINK1 from OMA1-mediated degradation and facilitating its accumulation at the outer mitochondrial membrane in response to depolarization. The polypeptide is Mitochondrial import inner membrane translocase subunit Tim23 (TIMM23) (Homo sapiens (Human)).